The primary structure comprises 321 residues: Lipoyl synthase (321 aa).

[4Fe-4S] cluster contacts are provided by Cys68, Cys73, Cys79, Cys94, Cys98, Cys101, and Ser308. A Radical SAM core domain is found at 80 to 297 (FNHGTATFMI…KELAESIGFT (218 aa)).

It belongs to the radical SAM superfamily. Lipoyl synthase family. Requires [4Fe-4S] cluster as cofactor.

Its subcellular location is the cytoplasm. It catalyses the reaction [[Fe-S] cluster scaffold protein carrying a second [4Fe-4S](2+) cluster] + N(6)-octanoyl-L-lysyl-[protein] + 2 oxidized [2Fe-2S]-[ferredoxin] + 2 S-adenosyl-L-methionine + 4 H(+) = [[Fe-S] cluster scaffold protein] + N(6)-[(R)-dihydrolipoyl]-L-lysyl-[protein] + 4 Fe(3+) + 2 hydrogen sulfide + 2 5'-deoxyadenosine + 2 L-methionine + 2 reduced [2Fe-2S]-[ferredoxin]. The protein operates within protein modification; protein lipoylation via endogenous pathway; protein N(6)-(lipoyl)lysine from octanoyl-[acyl-carrier-protein]: step 2/2. Catalyzes the radical-mediated insertion of two sulfur atoms into the C-6 and C-8 positions of the octanoyl moiety bound to the lipoyl domains of lipoate-dependent enzymes, thereby converting the octanoylated domains into lipoylated derivatives. This is Lipoyl synthase from Shewanella pealeana (strain ATCC 700345 / ANG-SQ1).